The following is a 217-amino-acid chain: Somatotropin (217 aa).

A signal peptide spans 1–26; that stretch reads MATGSRTSLLLAFTLLCLPQLKEAGA. Residue H44 coordinates Zn(2+). A disulfide bridge links C79 with C191. S132 carries the post-translational modification Phosphoserine. Residue E200 participates in Zn(2+) binding. C208 and C215 are joined by a disulfide.

It belongs to the somatotropin/prolactin family.

It localises to the secreted. Its function is as follows. Plays an important role in growth control. Its major role in stimulating body growth is to stimulate the liver and other tissues to secrete IGF1. It stimulates both the differentiation and proliferation of myoblasts. It also stimulates amino acid uptake and protein synthesis in muscle and other tissues. The protein is Somatotropin (GH1) of Saimiri boliviensis boliviensis (Bolivian squirrel monkey).